Consider the following 97-residue polypeptide: YcgL domain-containing protein CKO_01183 (97 aa).

The YcgL domain maps to 1 to 85 (MFCVIYRSSK…PPEDLLKQHL (85 aa)). The disordered stretch occupies residues 74–97 (PPPPEDLLKQHLSAPGENKPDAKS).

This is YcgL domain-containing protein CKO_01183 from Citrobacter koseri (strain ATCC BAA-895 / CDC 4225-83 / SGSC4696).